A 252-amino-acid chain; its full sequence is Cell division protein ZapD (252 aa).

Belongs to the ZapD family. As to quaternary structure, interacts with FtsZ.

It localises to the cytoplasm. In terms of biological role, cell division factor that enhances FtsZ-ring assembly. Directly interacts with FtsZ and promotes bundling of FtsZ protofilaments, with a reduction in FtsZ GTPase activity. This Cupriavidus necator (strain ATCC 17699 / DSM 428 / KCTC 22496 / NCIMB 10442 / H16 / Stanier 337) (Ralstonia eutropha) protein is Cell division protein ZapD.